Here is an 80-residue protein sequence, read N- to C-terminus: MDMKNMREYMSWLYYQYLLITGIYVLEPWEQSIFNTVLFTMVAMVIYTSYVFVPIHVRLALEFFCELVGGQPESTVALMT.

The Cytoplasmic segment spans residues 1–11 (MDMKNMREYMS). The chain crosses the membrane as a helical span at residues 12 to 29 (WLYYQYLLITGIYVLEPW). At 30-36 (EQSIFNT) the chain is on the lumenal side. The helical transmembrane segment at 37-57 (VLFTMVAMVIYTSYVFVPIHV) threads the bilayer. Residues 58–80 (RLALEFFCELVGGQPESTVALMT) lie on the Cytoplasmic side of the membrane.

The protein belongs to the SPTSS family. SPTSSB subfamily. As to quaternary structure, component of the serine palmitoyltransferase (SPT) complex, which is composed of SPTLC1, SPTLC2 or SPTLC3 and SPTSSA or SPTSSB. The heterodimer consisting of SPTLC1 and SPTLC2/SPTLC3 forms the catalytic core of the enzyme, while SPTSSA or SPTSSB subunits determine substrate specificity. SPT also interacts with ORMDL proteins, especially ORMDL3, which negatively regulate SPT activity in the presence of ceramides.

Its subcellular location is the endoplasmic reticulum membrane. It participates in lipid metabolism; sphingolipid metabolism. Component of the serine palmitoyltransferase multisubunit enzyme (SPT) that catalyzes the initial and rate-limiting step in sphingolipid biosynthesis by condensing L-serine and activated acyl-CoA (most commonly palmitoyl-CoA) to form long-chain bases. The SPT complex is composed of SPTLC1, SPTLC2 or SPTLC3 and SPTSSA or SPTSSB. Within this complex, the heterodimer consisting of SPTLC1 and SPTLC2/SPTLC3 forms the catalytic core. Within the SPT complex, SPTSSB stimulates the catalytic activity and plays a role in substrate specificity. SPT complexes with this subunit showing a preference for longer acyl-CoAs. The SPTLC1-SPTLC2-SPTSSB complex shows a strong preference for C18-CoA substrate, while the SPTLC1-SPTLC3-SPTSSB isozyme displays an ability to use a broader range of acyl-CoAs, without apparent preference. In Danio rerio (Zebrafish), this protein is Serine palmitoyltransferase small subunit B (sptssb).